A 244-amino-acid polypeptide reads, in one-letter code: 15,16-dihydrobiliverdin:ferredoxin oxidoreductase (244 aa).

This sequence belongs to the HY2 family.

It catalyses the reaction 15,16-dihydrobiliverdin + oxidized 2[4Fe-4S]-[ferredoxin] = biliverdin IXalpha + reduced 2[4Fe-4S]-[ferredoxin] + 2 H(+). In terms of biological role, catalyzes the two-electron reduction of biliverdin IX-alpha at the C15 methine bridge. This chain is 15,16-dihydrobiliverdin:ferredoxin oxidoreductase (pebA), found in Nostoc punctiforme (strain ATCC 29133 / PCC 73102).